We begin with the raw amino-acid sequence, 480 residues long: Ammonium transporter 3 member 3 (480 aa).

Helical transmembrane passes span 31–51, 59–79, 135–155, 169–189, 198–218, 233–253, 265–287, 292–314, 318–337, 361–381, and 407–427; these read SATL…GSIV, SAFM…VWAY, MVYF…GSLL, LWIT…GFLF, GGYV…YWVG, ILLV…FNGG, AVLN…DVFF, SVIG…AGLV, AAIV…MMVL, GFLG…SLFL, and LFVT…ISLI.

Belongs to the ammonia transporter channel (TC 1.A.11.2) family.

It localises to the membrane. In terms of biological role, involved in ammonium transport. The chain is Ammonium transporter 3 member 3 (AMT3-3) from Oryza sativa subsp. japonica (Rice).